A 249-amino-acid chain; its full sequence is Expansin-A19 (249 aa).

A signal peptide spans 1–21 (MGNIFLQLLAVVALCIAPARS). Residues 41–154 (GGACGYGNLY…QQVKCWRYGG (114 aa)) form the Expansin-like EG45 domain. N-linked (GlcNAc...) asparagine glycosylation is found at Asn116 and Asn216. The Expansin-like CBD domain maps to 164–243 (YFELVLVTNM…GWSFGQTFST (80 aa)).

The protein belongs to the expansin family. Expansin A subfamily.

It is found in the secreted. Its subcellular location is the cell wall. The protein resides in the membrane. Functionally, may cause loosening and extension of plant cell walls by disrupting non-covalent bonding between cellulose microfibrils and matrix glucans. No enzymatic activity has been found. May be required for rapid internodal elongation in deepwater rice during submergence. This chain is Expansin-A19 (EXPA19), found in Oryza sativa subsp. japonica (Rice).